The following is a 958-amino-acid chain: Glycine dehydrogenase (decarboxylating) (958 aa).

An N6-(pyridoxal phosphate)lysine modification is found at lysine 708.

It belongs to the GcvP family. As to quaternary structure, the glycine cleavage system is composed of four proteins: P, T, L and H. It depends on pyridoxal 5'-phosphate as a cofactor.

The enzyme catalyses N(6)-[(R)-lipoyl]-L-lysyl-[glycine-cleavage complex H protein] + glycine + H(+) = N(6)-[(R)-S(8)-aminomethyldihydrolipoyl]-L-lysyl-[glycine-cleavage complex H protein] + CO2. Its function is as follows. The glycine cleavage system catalyzes the degradation of glycine. The P protein binds the alpha-amino group of glycine through its pyridoxal phosphate cofactor; CO(2) is released and the remaining methylamine moiety is then transferred to the lipoamide cofactor of the H protein. This chain is Glycine dehydrogenase (decarboxylating), found in Proteus mirabilis (strain HI4320).